A 563-amino-acid chain; its full sequence is Calmodulin-binding protein 60 G (563 aa).

Residues methionine 1 to arginine 76 form a calmodulin-binding region. The tract at residues glutamate 147–lysine 263 is DNA-binding.

It belongs to the plant ACBP60 protein family. Interacts with calmodulin (CaM) in the presence of calcium ions; this interaction is required for defense responses. As to quaternary structure, (Microbial infection) Interacts with V.dahliae SCP41; the interaction is direct and inhibits CBP60G. As to expression, expressed in seedlings, roots, leaves, inflorescences and flowers, and, to a lower extent, in siliques. Particularly present in guard cells.

The protein resides in the nucleus. Functionally, transcription activator that binds DNA in a sequence-specific manner, 5'-GAAATTTTGG-3', to promote the expression of target genes. Recruited to the promoter of ICS1 and other defense-related genes (e.g. PR1, PR2 and EDS5) in response to both biotic (e.g. Pseudomonas syringae pv. maculicola ES4326, P.syringae pv. tomato DC3000, and microbe-associated molecular patterns (MAMPs) such as flg22) and abiotic stresses (e.g. UV-B, drought and abscisic acid), thus triggering rapid defense responses by stimulating salicylic acid (SA) biosynthesis. Involved in basal and systemic acquired resistance to P.syringae and Hyaloperonospora arabidopsidis. Mediates resistance to drought and sensitivity to abscisic acid (ABA), especially for ABA-mediated signaling process that regulates early seedling growth. This is Calmodulin-binding protein 60 G from Arabidopsis thaliana (Mouse-ear cress).